A 182-amino-acid chain; its full sequence is Large ribosomal subunit protein uL16 (182 aa).

It belongs to the universal ribosomal protein uL16 family.

This chain is Large ribosomal subunit protein uL16, found in Pyrobaculum islandicum (strain DSM 4184 / JCM 9189 / GEO3).